The chain runs to 750 residues: Photosystem I P700 chlorophyll a apoprotein A1 (750 aa).

8 helical membrane-spanning segments follow: residues 70–93 (VFSAHFGQLAIILIWLSGMYFHGA), 156–179 (LYCTAIGALIFAGLMLFAGWFHYH), 195–219 (LNHHLAGLLGLGSLGWAGHQVHVSL), 291–309 (TAHHHLAIGVLFLVAGHMY), 346–369 (WHAQLALNLAMLGSLTIIVAHHMY), 385–411 (LSLFTHHMWIGGFLVVGAAAHAAIFMV), 433–455 (AIISHLNWVCIFLGFHSFGLYIH), and 531–549 (FLVHHIHAFTIHVTVLILL). [4Fe-4S] cluster contacts are provided by C573 and C582. The next 2 helical transmembrane spans lie at 589–610 (HVFLGLFWMYNSISIVIFHFSW) and 664–686 (LSAYGLLFLGAHFVWAFSLMFLF). H675 is a chlorophyll a' binding site. Chlorophyll a contacts are provided by M683 and Y691. W692 lines the phylloquinone pocket. Residues 724–744 (AVGVAHYLLGGIATTWAFFLA) traverse the membrane as a helical segment.

This sequence belongs to the PsaA/PsaB family. The PsaA/B heterodimer binds the P700 chlorophyll special pair and subsequent electron acceptors. PSI consists of a core antenna complex that captures photons, and an electron transfer chain that converts photonic excitation into a charge separation. The eukaryotic PSI reaction center is composed of at least 11 subunits. P700 is a chlorophyll a/chlorophyll a' dimer, A0 is one or more chlorophyll a, A1 is one or both phylloquinones and FX is a shared 4Fe-4S iron-sulfur center. serves as cofactor.

The protein localises to the plastid. It localises to the chloroplast thylakoid membrane. It carries out the reaction reduced [plastocyanin] + hnu + oxidized [2Fe-2S]-[ferredoxin] = oxidized [plastocyanin] + reduced [2Fe-2S]-[ferredoxin]. Functionally, psaA and PsaB bind P700, the primary electron donor of photosystem I (PSI), as well as the electron acceptors A0, A1 and FX. PSI is a plastocyanin-ferredoxin oxidoreductase, converting photonic excitation into a charge separation, which transfers an electron from the donor P700 chlorophyll pair to the spectroscopically characterized acceptors A0, A1, FX, FA and FB in turn. Oxidized P700 is reduced on the lumenal side of the thylakoid membrane by plastocyanin. This Angiopteris evecta (Mule's foot fern) protein is Photosystem I P700 chlorophyll a apoprotein A1.